A 177-amino-acid polypeptide reads, in one-letter code: ATP synthase subunit delta (177 aa).

The protein belongs to the ATPase delta chain family. In terms of assembly, F-type ATPases have 2 components, F(1) - the catalytic core - and F(0) - the membrane proton channel. F(1) has five subunits: alpha(3), beta(3), gamma(1), delta(1), epsilon(1). F(0) has three main subunits: a(1), b(2) and c(10-14). The alpha and beta chains form an alternating ring which encloses part of the gamma chain. F(1) is attached to F(0) by a central stalk formed by the gamma and epsilon chains, while a peripheral stalk is formed by the delta and b chains.

Its subcellular location is the cell membrane. Functionally, f(1)F(0) ATP synthase produces ATP from ADP in the presence of a proton or sodium gradient. F-type ATPases consist of two structural domains, F(1) containing the extramembraneous catalytic core and F(0) containing the membrane proton channel, linked together by a central stalk and a peripheral stalk. During catalysis, ATP synthesis in the catalytic domain of F(1) is coupled via a rotary mechanism of the central stalk subunits to proton translocation. In terms of biological role, this protein is part of the stalk that links CF(0) to CF(1). It either transmits conformational changes from CF(0) to CF(1) or is implicated in proton conduction. The sequence is that of ATP synthase subunit delta from Carboxydothermus hydrogenoformans (strain ATCC BAA-161 / DSM 6008 / Z-2901).